Reading from the N-terminus, the 398-residue chain is 1-deoxy-D-xylulose 5-phosphate reductoisomerase (398 aa).

Residues threonine 10, glycine 11, serine 12, isoleucine 13, lysine 37, asparagine 38, and asparagine 124 each coordinate NADPH. 1-deoxy-D-xylulose 5-phosphate is bound at residue lysine 125. Glutamate 126 serves as a coordination point for NADPH. Residue aspartate 150 participates in Mn(2+) binding. 1-deoxy-D-xylulose 5-phosphate contacts are provided by serine 151, glutamate 152, serine 186, and histidine 209. Residue glutamate 152 coordinates Mn(2+). Position 215 (glycine 215) interacts with NADPH. Residues serine 222, asparagine 227, lysine 228, and glutamate 231 each contribute to the 1-deoxy-D-xylulose 5-phosphate site. Residue glutamate 231 coordinates Mn(2+).

It belongs to the DXR family. Homodimer. It depends on Mg(2+) as a cofactor. Requires Mn(2+) as cofactor.

The enzyme catalyses 2-C-methyl-D-erythritol 4-phosphate + NADP(+) = 1-deoxy-D-xylulose 5-phosphate + NADPH + H(+). It participates in isoprenoid biosynthesis; isopentenyl diphosphate biosynthesis via DXP pathway; isopentenyl diphosphate from 1-deoxy-D-xylulose 5-phosphate: step 1/6. Its function is as follows. Catalyzes the NADPH-dependent rearrangement and reduction of 1-deoxy-D-xylulose-5-phosphate (DXP) to 2-C-methyl-D-erythritol 4-phosphate (MEP). The protein is 1-deoxy-D-xylulose 5-phosphate reductoisomerase of Buchnera aphidicola subsp. Acyrthosiphon pisum (strain APS) (Acyrthosiphon pisum symbiotic bacterium).